A 274-amino-acid polypeptide reads, in one-letter code: Glucosamine-6-phosphate deaminase (274 aa).

Aspartate 71 functions as the Proton acceptor; for enolization step in the catalytic mechanism. Aspartate 140 functions as the For ring-opening step in the catalytic mechanism. Catalysis depends on histidine 142, which acts as the Proton acceptor; for ring-opening step. Glutamate 147 serves as the catalytic For ring-opening step.

Belongs to the glucosamine/galactosamine-6-phosphate isomerase family. NagB subfamily.

The enzyme catalyses alpha-D-glucosamine 6-phosphate + H2O = beta-D-fructose 6-phosphate + NH4(+). It functions in the pathway amino-sugar metabolism; N-acetylneuraminate degradation; D-fructose 6-phosphate from N-acetylneuraminate: step 5/5. Its function is as follows. Catalyzes the reversible isomerization-deamination of glucosamine 6-phosphate (GlcN6P) to form fructose 6-phosphate (Fru6P) and ammonium ion. The protein is Glucosamine-6-phosphate deaminase of Fusobacterium nucleatum subsp. nucleatum (strain ATCC 25586 / DSM 15643 / BCRC 10681 / CIP 101130 / JCM 8532 / KCTC 2640 / LMG 13131 / VPI 4355).